Reading from the N-terminus, the 2615-residue chain is Polycystin-1-like protein 1 (2615 aa).

The Extracellular segment spans residues 1–1524; that stretch reads MDVDEDQHAV…VSSISEFQSH (1524 aa). A disordered region spans residues 17–93; it reads IQANPELCVS…GTNSFSNPPP (77 aa). Asn-224, Asn-297, Asn-306, Asn-390, Asn-440, Asn-534, and Asn-619 each carry an N-linked (GlcNAc...) asparagine glycan. PKD domains follow at residues 291-373 and 375-456; these read SVSV…VQKR and MANR…VREP. An REJ domain is found at 457–1349; that stretch reads CQPPPVKNMG…GEEDYLHKRN (893 aa). The disordered stretch occupies residues 749-815; it reads SSKSDLPSNL…GEPMEEYSSL (67 aa). Residues 778-789 show a composition bias toward polar residues; sequence ALSNLGSISAES. One can recognise a GAIN-B domain in the interval 1364–1512; the sequence is RFTGLSENSQ…SVLRRKLNAT (149 aa). Residue Asn-1458 is glycosylated (N-linked (GlcNAc...) asparagine). The cysteines at positions 1468 and 1494 are disulfide-linked. The GPS stretch occupies residues 1468-1512; that stretch reads CVFWDKTEWRSEGPYPQPGSSPEKVNCSYHHLAPVSVLRRKLNAT. A glycan (N-linked (GlcNAc...) asparagine) is linked at Asn-1510. Residues 1525-1545 traverse the membrane as a helical segment; that stretch reads PHNLLPGIFSAFLLVLYGILV. Topologically, residues 1546-1732 are cytoplasmic; that stretch reads SKSRYVDCHE…PPSRSYLHTQ (187 aa). Residues 1573-1690 form the PLAT domain; it reads QLYAVVIDTG…LGGHVLREFF (118 aa). A helical membrane pass occupies residues 1733–1753; sequence RLAVSFCLLCVYSCLTALVTV. The Extracellular portion of the chain corresponds to 1754–1772; that stretch reads RDHQQRPLDVGPTAITLEP. Residues 1773 to 1793 traverse the membrane as a helical segment; sequence FCMALLCTLLACPVAQLLSLL. Residues 1794–1905 lie on the Cytoplasmic side of the membrane; it reads FRCSKEARGD…ELGSQKSRVC (112 aa). The tract at residues 1807–1840 is disordered; the sequence is STQWPLRGVKTETPQGHDSSGRPDSRQPSPHPTS. Residues 1906 to 1926 form a helical membrane-spanning segment; that stretch reads LLWSSSVAWAISGSASLACGL. Residues 1927-1950 are Extracellular-facing; it reads GTGFLGYWFVPAQCMWWLYLLLLS. The helical transmembrane segment at 1951 to 1971 threads the bilayer; the sequence is LVCCAFITQPLMICLAALVFA. At 1972–2057 the chain is on the cytoplasmic side; sequence WKRKHDSKFF…ERLRRESIMQ (86 aa). A helical transmembrane segment spans residues 2058–2078; the sequence is AALRDMTTHSIMLLLLLFIAY. The Extracellular portion of the chain corresponds to 2079–2288; the sequence is GRFCPGEISL…IFYSDSALKY (210 aa). A helical transmembrane segment spans residues 2289 to 2309; the sequence is LLMLSELLFLVLNVIHLCFQL. Topologically, residues 2310 to 2332 are cytoplasmic; the sequence is WGMTTKGILSYWRKPRHWLELSM. The chain crosses the membrane as a helical span at residues 2333-2353; it reads VGVAIAYYAASGHLTTLAVNI. Over 2354–2379 the chain is Extracellular; the sequence is TDQFHKGLYQRLVDIGLMVSWHQRAR. The chain crosses the membrane as a helical span at residues 2380-2400; sequence CLQGILLFLWMLKYVHLLSSL. At 2401-2405 the chain is on the cytoplasmic side; sequence STMTP. The chain crosses the membrane as a helical span at residues 2406 to 2426; it reads FSAVTCFPLFRVLLVGALLLA. Residues 2427-2483 lie on the Extracellular side of the membrane; sequence AHYHSRWFLLFTGTLSHGTSAEAFPGLLLQFPGRSKKDSWHNCLKSDHGVMRCYYGT. Residues 2484 to 2504 traverse the membrane as a helical segment; it reads LFLLLATLGFRMLRATFLTVF. Topologically, residues 2505-2615 are cytoplasmic; that stretch reads QNRKSSHRKP…VSGPLAAESE (111 aa). The segment at 2589 to 2615 is disordered; it reads RAGDSPPVGSSEYQATGVSGPLAAESE.

The protein belongs to the polycystin family. In terms of assembly, heterodimer. Interacts with PKD2 to form a calcium channel. Interacts with PKD2L1; to form ciliary calcium channel. May interact with GNA12, GNAS, GNAI1 and GNAI2. In testis, strong expression in Leydig cells, low level in seminal ducts, myoid cells and tunica vaginalis. Other tissues, including adrenal gland and heart myocardium, also show low expression. In embryo, highly expressed in the node.

The protein resides in the cell projection. Its subcellular location is the cilium membrane. In terms of biological role, component of a calcium-permeant ion channel formed by PKD1L2 and PKD1L1 in primary cilia, where it controls cilium calcium concentration, without affecting cytoplasmic calcium concentration, and regulates sonic hedgehog/SHH signaling and GLI2 transcription. The PKD1L1:PKD2L1 channel complex is mechanosensitive only at high pressures and is highly temperature sensitive. Also involved in left/right axis specification downstream of nodal flow by forming a complex with PKD2 in cilia to facilitate flow detection in left/right patterning. May function as a G-protein-coupled receptor. In Mus musculus (Mouse), this protein is Polycystin-1-like protein 1.